The chain runs to 156 residues: MTGAAVSVCLLYALSVCSACYISNCPIGGKRSIMDAPQRKCMSCGPGEQGRCFGPSICCGKDVGCWMGSPETAHCMEENYLPTPCQVGGRPCGSDTVRCASPGVCCDSEGCSADQSCFAEEEGDNQIGQSEGSNSADVILRLLHLADHTPPHRVHQ.

A signal peptide spans 1-19; it reads MTGAAVSVCLLYALSVCSA. Cysteine 20 and cysteine 25 are joined by a disulfide. Position 28 is a glycine amide (glycine 28). Cystine bridges form between cysteine 41-cysteine 85, cysteine 44-cysteine 58, cysteine 52-cysteine 75, cysteine 59-cysteine 65, cysteine 92-cysteine 105, cysteine 99-cysteine 117, and cysteine 106-cysteine 111.

This sequence belongs to the vasopressin/oxytocin family. Post-translationally, seven disulfide bonds are present in neurophysin.

Its subcellular location is the secreted. Isotocin causes contraction of smooth muscles. The sequence is that of Isotocin-neurophysin IT 2 from Oncorhynchus keta (Chum salmon).